The primary structure comprises 315 residues: L-lactate dehydrogenase (315 aa).

Val14, Asp35, and Tyr66 together coordinate NAD(+). Substrate is bound by residues Gln83, Arg89, and 121 to 124 (NPVD). NAD(+) is bound by residues 119–121 (VAN) and Ser144. 149-152 (DTAR) contributes to the substrate binding site. The active-site Proton acceptor is His176. A Phosphotyrosine modification is found at Tyr221. Residue Thr230 coordinates substrate.

The protein belongs to the LDH/MDH superfamily. LDH family. In terms of assembly, homotetramer.

It is found in the cytoplasm. It carries out the reaction (S)-lactate + NAD(+) = pyruvate + NADH + H(+). It functions in the pathway fermentation; pyruvate fermentation to lactate; (S)-lactate from pyruvate: step 1/1. In terms of biological role, catalyzes the conversion of lactate to pyruvate. The sequence is that of L-lactate dehydrogenase from Mesomycoplasma hyopneumoniae (strain 7448) (Mycoplasma hyopneumoniae).